The chain runs to 458 residues: Putative long chain fatty acid-CoA ligase VraA (458 aa).

The protein belongs to the ATP-dependent AMP-binding enzyme family.

The protein is Putative long chain fatty acid-CoA ligase VraA (vraA) of Staphylococcus aureus (strain Mu3 / ATCC 700698).